We begin with the raw amino-acid sequence, 378 residues long: Squalene methyltransferase 2 (378 aa).

A helical membrane pass occupies residues 17 to 37 (LLTVKGATGLIAALILGYIII).

Belongs to the class I-like SAM-binding methyltransferase superfamily. Erg6/SMT family.

The protein localises to the microsome membrane. It catalyses the reaction squalene + 2 S-adenosyl-L-methionine = 3,22-dimethyl-1,2,23,24-tetradehydro-2,3,22,23-tetrahydrosqualene + 2 S-adenosyl-L-homocysteine + 2 H(+). Functionally, converts squalene to mono- and dimethyl derivatives, but not to tri- and tetramethylated products. Unable to methylate cycloartenol, zymosterol or lanosterol. Methylates both C-3 and C22 positions, but only C-3 position in monomethylated products. Produces mainly monomethylated squalene and only 20% of dimethylated squalene. This Botryococcus braunii (Green alga) protein is Squalene methyltransferase 2 (TMT-2).